A 316-amino-acid polypeptide reads, in one-letter code: Olfactory receptor 51J1 (316 aa).

Over 1 to 31 (MKISNNSLGFLPTTFILVGIPGLESEHLWIS) the chain is Extracellular. Asn-5 carries N-linked (GlcNAc...) asparagine glycosylation. A helical membrane pass occupies residues 32–52 (VPFSLIYIIIFLGNGIILHVI). Residues 53 to 63 (RTDIALHQPMY) lie on the Cytoplasmic side of the membrane. Residues 64 to 84 (LFLAMLALAEVRVSASTLPTV) form a helical membrane-spanning segment. The Extracellular portion of the chain corresponds to 85–104 (LGIFLFGNTEISLEACLFPD). Cysteines 100 and 191 form a disulfide. The helical transmembrane segment at 105 to 125 (VLHPFFIHDGASCAAGHVFGP) threads the bilayer. Over 126-161 (LYSHLQPTELHSYPDTAQGLWHRSYYRTEKHYAHGS) the chain is Cytoplasmic. Residues 162 to 182 (VAHSLMASALLWPQCPLTFLL) traverse the membrane as a helical segment. Over 183-191 (SAPQSYLSC) the chain is Extracellular. The helical transmembrane segment at 192-212 (GNISVNNIYGIFIVTSTFGLD) threads the bilayer. At 213–242 (SLLIVISYGLILHTVLGIATGEGRKKALNT) the chain is on the cytoplasmic side. Residues 243 to 263 (CGSHVCAVLAYYVPMIGLSIV) form a helical membrane-spanning segment. The Extracellular segment spans residues 264-275 (HRLGHRVSPLLQ). The chain crosses the membrane as a helical span at residues 276–296 (AMMANAYLFFPPVVNPIVYSI). Residues 297–316 (KTKEIHGAIVRMLLEKRRRV) are Cytoplasmic-facing.

This sequence belongs to the G-protein coupled receptor 1 family.

The protein localises to the cell membrane. Functionally, odorant receptor. The polypeptide is Olfactory receptor 51J1 (OR51J1) (Homo sapiens (Human)).